We begin with the raw amino-acid sequence, 180 residues long: Hypoxanthine-guanine phosphoribosyltransferase (180 aa).

2 residues coordinate diphosphate: Lys43 and Gly44. Glu99 and Asp100 together coordinate Mg(2+). Catalysis depends on Asp103, which acts as the Proton acceptor. Residues Lys131, 152 to 153, and Asp159 each bind GMP; that span reads FI. Diphosphate is bound at residue Arg165.

Belongs to the purine/pyrimidine phosphoribosyltransferase family. It depends on Mg(2+) as a cofactor.

It is found in the cytoplasm. The catalysed reaction is IMP + diphosphate = hypoxanthine + 5-phospho-alpha-D-ribose 1-diphosphate. It catalyses the reaction GMP + diphosphate = guanine + 5-phospho-alpha-D-ribose 1-diphosphate. Its pathway is purine metabolism; IMP biosynthesis via salvage pathway; IMP from hypoxanthine: step 1/1. It participates in purine metabolism; GMP biosynthesis via salvage pathway; GMP from guanine: step 1/1. Its function is as follows. Purine salvage pathway enzyme that catalyzes the transfer of the ribosyl-5-phosphate group from 5-phospho-alpha-D-ribose 1-diphosphate (PRPP) to the N9 position of the 6-oxopurines hypoxanthine and guanine to form the corresponding ribonucleotides IMP (inosine 5'-monophosphate) and GMP (guanosine 5'-monophosphate), with the release of PPi. The chain is Hypoxanthine-guanine phosphoribosyltransferase (hpt) from Streptococcus thermophilus (strain CNRZ 1066).